The chain runs to 371 residues: Histidinol-phosphate aminotransferase (371 aa).

Lys-228 is subject to N6-(pyridoxal phosphate)lysine.

This sequence belongs to the class-II pyridoxal-phosphate-dependent aminotransferase family. Histidinol-phosphate aminotransferase subfamily. Requires pyridoxal 5'-phosphate as cofactor.

The catalysed reaction is L-histidinol phosphate + 2-oxoglutarate = 3-(imidazol-4-yl)-2-oxopropyl phosphate + L-glutamate. It functions in the pathway amino-acid biosynthesis; L-histidine biosynthesis; L-histidine from 5-phospho-alpha-D-ribose 1-diphosphate: step 7/9. This Methanococcus maripaludis (strain C6 / ATCC BAA-1332) protein is Histidinol-phosphate aminotransferase.